Reading from the N-terminus, the 338-residue chain is Anthranilate phosphoribosyltransferase (338 aa).

5-phospho-alpha-D-ribose 1-diphosphate is bound by residues glycine 80, 83 to 84 (GD), threonine 88, 90 to 93 (NIST), 108 to 116 (KHGNRAMSS), and serine 120. Anthranilate is bound at residue glycine 80. Serine 92 lines the Mg(2+) pocket. Asparagine 111 is a binding site for anthranilate. Residue arginine 166 coordinates anthranilate. Residues aspartate 225 and glutamate 226 each contribute to the Mg(2+) site.

Belongs to the anthranilate phosphoribosyltransferase family. In terms of assembly, homodimer. Mg(2+) is required as a cofactor.

It catalyses the reaction N-(5-phospho-beta-D-ribosyl)anthranilate + diphosphate = 5-phospho-alpha-D-ribose 1-diphosphate + anthranilate. The protein operates within amino-acid biosynthesis; L-tryptophan biosynthesis; L-tryptophan from chorismate: step 2/5. Functionally, catalyzes the transfer of the phosphoribosyl group of 5-phosphorylribose-1-pyrophosphate (PRPP) to anthranilate to yield N-(5'-phosphoribosyl)-anthranilate (PRA). This chain is Anthranilate phosphoribosyltransferase, found in Herpetosiphon aurantiacus (strain ATCC 23779 / DSM 785 / 114-95).